A 749-amino-acid chain; its full sequence is Cytosolic phospholipase A2 (749 aa).

Positions 1–178 (MSFIDPYQHI…MKKLLGPKKS (178 aa)) are phospholipid binding. Ser2 carries the post-translational modification Phosphoserine. Positions 6 to 122 (PYQHIIVEHQ…KVGEKKEVPF (117 aa)) constitute a C2 domain. Ca(2+) contacts are provided by Asp40, Thr41, Asp43, Asn65, Asp93, Ala94, and Asn95. A PLA2c domain is found at 140–740 (SCPDLRFSMA…SNVEARRFFN (601 aa)). The active-site Nucleophile is the Ser228. Thr268 is modified (phosphothreonine). The disordered stretch occupies residues 427 to 456 (KHIVSNDSSDSDDESQEPKGTENEDAERDY). Phosphoserine is present on residues Ser434, Ser435, and Ser437. At Ser505 the chain carries Phosphoserine; by MAPK. A Phosphoserine modification is found at Ser515. A Glycyl lysine isopeptide (Lys-Gly) (interchain with G-Cter in SUMO2) cross-link involves residue Lys541. Asp549 functions as the Proton acceptor in the catalytic mechanism. Lys606 is covalently cross-linked (Glycyl lysine isopeptide (Lys-Gly) (interchain with G-Cter in SUMO2)). Phosphoserine occurs at positions 727 and 729.

Interacts with KAT5. Phosphorylated at both Ser-505 and Ser-727 in response to mitogenic stimuli.

The protein localises to the cytoplasm. Its subcellular location is the golgi apparatus membrane. It localises to the nucleus envelope. It carries out the reaction a 1,2-diacyl-sn-glycero-3-phosphocholine + H2O = a 1-acyl-sn-glycero-3-phosphocholine + a fatty acid + H(+). The catalysed reaction is a 1-O-alkyl-2-acyl-sn-glycero-3-phosphocholine + H2O = a 1-O-alkyl-sn-glycero-3-phosphocholine + a fatty acid + H(+). The enzyme catalyses a 1-acyl-sn-glycero-3-phosphocholine + H2O = sn-glycerol 3-phosphocholine + a fatty acid + H(+). It catalyses the reaction 1-hexadecanoyl-2-(5Z,8Z,11Z,14Z-eicosatetraenoyl)-sn-glycero-3-phosphocholine + H2O = 1-hexadecanoyl-sn-glycero-3-phosphocholine + (5Z,8Z,11Z,14Z)-eicosatetraenoate + H(+). It carries out the reaction 1,2-di-(5Z,8Z,11Z,14Z-eicosatetraenoyl)-sn-glycero-3-phosphocholine + H2O = 1-(5Z,8Z,11Z,14Z-eicosatetraenoyl)-sn-glycero-3-phosphocholine + (5Z,8Z,11Z,14Z)-eicosatetraenoate + H(+). The catalysed reaction is 1-octadecanoyl-2-(5Z,8Z,11Z,14Z-eicosatetraenoyl)-sn-glycero-3-phosphocholine + H2O = 1-octadecanoyl-sn-glycero-3-phosphocholine + (5Z,8Z,11Z,14Z)-eicosatetraenoate + H(+). The enzyme catalyses 1-hexadecanoyl-2-(9Z,12Z-octadecadienoyl)-sn-glycero-3-phosphocholine + H2O = (9Z,12Z)-octadecadienoate + 1-hexadecanoyl-sn-glycero-3-phosphocholine + H(+). It catalyses the reaction 1-octadecanoyl-2-(9Z,12Z,15Z-octadecatrienoyl)-sn-glycero-3-phosphocholine + H2O = (9Z,12Z,15Z)-octadecatrienoate + 1-octadecanoyl-sn-glycero-3-phosphocholine + H(+). It carries out the reaction 1-(5Z,8Z,11Z,14Z-eicosatetraenoyl)-2-hexadecanoyl-sn-glycero-3-phosphocholine + H2O = 1-(5Z,8Z,11Z,14Z-eicosatetraenoyl)-sn-glycero-3-phosphocholine + hexadecanoate + H(+). The catalysed reaction is 1-O-hexadecyl-2-(5Z,8Z,11Z,14Z)-eicosatetraenoyl-sn-glycero-3-phosphocholine + H2O = 1-O-hexadecyl-sn-glycero-3-phosphocholine + (5Z,8Z,11Z,14Z)-eicosatetraenoate + H(+). The enzyme catalyses 1,2-di-(9Z-octadecenoyl)-sn-glycero-3-phospho-(1'-sn-glycerol) + H2O = 1-(9Z-octadecenoyl)-sn-glycero-3-phospho-(1'-sn-glycerol) + (9Z)-octadecenoate + H(+). It catalyses the reaction 1-octadecanoyl-2-(5Z,8Z,11Z,14Z-eicosatetraenoyl)-sn-glycero-3-phosphate + H2O = 1-octadecanoyl-sn-glycero-3-phosphate + (5Z,8Z,11Z,14Z)-eicosatetraenoate + H(+). It carries out the reaction 1-hexadecanoyl-sn-glycero-3-phosphocholine + H2O = sn-glycerol 3-phosphocholine + hexadecanoate + H(+). The catalysed reaction is 2-(prostaglandin E2)-sn-glycero-3-phosphoethanolamine + H2O = sn-glycero-3-phosphoethanolamine + prostaglandin E2 + H(+). The enzyme catalyses 2-[(15S)-hydroxy-(5Z,8Z,11Z,13E)-eicosatetraenoyl]-sn-glycero-3-phosphocholine + H2O = (15S)-hydroxy-(5Z,8Z,11Z,13E)-eicosatetraenoate + sn-glycerol 3-phosphocholine + H(+). It catalyses the reaction 2-[(15R)-hydroxy-(5Z,8Z,11Z,13E)-eicosatetraenoyl]-sn-glycero-3-phosphocholine + H2O = (15R)-hydroxy-(5Z,8Z,11Z,13E)-eicosatetraenoate + sn-glycerol 3-phosphocholine + H(+). It carries out the reaction 2-(prostaglandin E2)-sn-glycero-3-phosphocholine + H2O = prostaglandin E2 + sn-glycerol 3-phosphocholine + H(+). The catalysed reaction is 2-[(11R)-hydroxy-(5Z,8Z,12E,14Z)-eicosatetraenoyl]-sn-glycero-3-phosphocholine + H2O = (11R)-hydroxy-(5Z,8Z,12E,14Z)-eicosatetraenoate + sn-glycerol 3-phosphocholine + H(+). The enzyme catalyses 1-(5Z,8Z,11Z,14Z-eicosatetraenoyl)-2-O-hexadecyl-sn-glycero-3-phosphocholine + H2O = 2-O-hexadecyl-sn-glycero-3-phosphocholine + (5Z,8Z,11Z,14Z)-eicosatetraenoate + H(+). It catalyses the reaction 1-octadecanoyl-2-(5Z,8Z,11Z,14Z-eicosatetraenoyl)-sn-glycero-3-phosphocholine + glycerol = 1-(5Z,8Z,11Z,14Z-eicosatetraenoyl)-glycerol + 1-octadecanoyl-sn-glycero-3-phosphocholine. It carries out the reaction 1-octadecanoyl-2-(9Z,12Z,15Z-octadecatrienoyl)-sn-glycero-3-phosphocholine + glycerol = 1-(9Z,12Z,15Z-octadecatrienoyl)-glycerol + 1-octadecanoyl-sn-glycero-3-phosphocholine. It functions in the pathway membrane lipid metabolism; glycerophospholipid metabolism. The protein operates within lipid metabolism; arachidonate metabolism. Its pathway is lipid metabolism; prostaglandin biosynthesis. It participates in lipid metabolism; leukotriene B4 biosynthesis. With respect to regulation, activated by cytosolic calcium, which is necessary for binding to membrane lipids. Activated by phosphorylation in response to mitogenic stimuli. Functionally, has primarily calcium-dependent phospholipase and lysophospholipase activities, with a major role in membrane lipid remodeling and biosynthesis of lipid mediators of the inflammatory response. Plays an important role in embryo implantation and parturition through its ability to trigger prostanoid production. Preferentially hydrolyzes the ester bond of the fatty acyl group attached at sn-2 position of phospholipids (phospholipase A2 activity). Selectively hydrolyzes sn-2 arachidonoyl group from membrane phospholipids, providing the precursor for eicosanoid biosynthesis via the cyclooxygenase pathway. In an alternative pathway of eicosanoid biosynthesis, hydrolyzes sn-2 fatty acyl chain of eicosanoid lysophopholipids to release free bioactive eicosanoids. Hydrolyzes the ester bond of the fatty acyl group attached at sn-1 position of phospholipids (phospholipase A1 activity) only if an ether linkage rather than an ester linkage is present at the sn-2 position. This hydrolysis is not stereospecific. Has calcium-independent phospholipase A2 and lysophospholipase activities in the presence of phosphoinositides. Has O-acyltransferase activity. Catalyzes the transfer of fatty acyl chains from phospholipids to a primary hydroxyl group of glycerol (sn-1 or sn-3), potentially contributing to monoacylglycerol synthesis. This chain is Cytosolic phospholipase A2 (PLA2G4A), found in Equus caballus (Horse).